A 190-amino-acid polypeptide reads, in one-letter code: Threonylcarbamoyl-AMP synthase (190 aa).

The YrdC-like domain occupies 7 to 190 (TGSSAAVVDL…ALTGELFRQG (184 aa)).

It belongs to the SUA5 family. TsaC subfamily.

Its subcellular location is the cytoplasm. It carries out the reaction L-threonine + hydrogencarbonate + ATP = L-threonylcarbamoyladenylate + diphosphate + H2O. Functionally, required for the formation of a threonylcarbamoyl group on adenosine at position 37 (t(6)A37) in tRNAs that read codons beginning with adenine. Catalyzes the conversion of L-threonine, HCO(3)(-)/CO(2) and ATP to give threonylcarbamoyl-AMP (TC-AMP) as the acyladenylate intermediate, with the release of diphosphate. This chain is Threonylcarbamoyl-AMP synthase, found in Salmonella typhi.